The sequence spans 274 residues: Large ribosomal subunit protein uL2 (274 aa).

Disordered regions lie at residues 28 to 53 and 223 to 274; these read KPYAPLLEKNSKSGGRNNNGRITVRH and VAMN…RRTK. Low complexity predominate over residues 39 to 48; that stretch reads KSGGRNNNGR. A compositionally biased stretch (basic residues) spans 254-274; the sequence is KGAKTRKNKRTDKFIVRRRTK.

The protein belongs to the universal ribosomal protein uL2 family. Part of the 50S ribosomal subunit. Forms a bridge to the 30S subunit in the 70S ribosome.

Functionally, one of the primary rRNA binding proteins. Required for association of the 30S and 50S subunits to form the 70S ribosome, for tRNA binding and peptide bond formation. It has been suggested to have peptidyltransferase activity; this is somewhat controversial. Makes several contacts with the 16S rRNA in the 70S ribosome. This Pseudoalteromonas translucida (strain TAC 125) protein is Large ribosomal subunit protein uL2.